We begin with the raw amino-acid sequence, 369 residues long: UDP-N-acetylglucosamine--N-acetylmuramyl-(pentapeptide) pyrophosphoryl-undecaprenol N-acetylglucosamine transferase (369 aa).

Residues 15 to 17 (TGG), Asn126, Arg169, Ser197, and Gln299 contribute to the UDP-N-acetyl-alpha-D-glucosamine site.

This sequence belongs to the glycosyltransferase 28 family. MurG subfamily.

Its subcellular location is the cell inner membrane. It carries out the reaction di-trans,octa-cis-undecaprenyl diphospho-N-acetyl-alpha-D-muramoyl-L-alanyl-D-glutamyl-meso-2,6-diaminopimeloyl-D-alanyl-D-alanine + UDP-N-acetyl-alpha-D-glucosamine = di-trans,octa-cis-undecaprenyl diphospho-[N-acetyl-alpha-D-glucosaminyl-(1-&gt;4)]-N-acetyl-alpha-D-muramoyl-L-alanyl-D-glutamyl-meso-2,6-diaminopimeloyl-D-alanyl-D-alanine + UDP + H(+). It participates in cell wall biogenesis; peptidoglycan biosynthesis. Cell wall formation. Catalyzes the transfer of a GlcNAc subunit on undecaprenyl-pyrophosphoryl-MurNAc-pentapeptide (lipid intermediate I) to form undecaprenyl-pyrophosphoryl-MurNAc-(pentapeptide)GlcNAc (lipid intermediate II). This is UDP-N-acetylglucosamine--N-acetylmuramyl-(pentapeptide) pyrophosphoryl-undecaprenol N-acetylglucosamine transferase from Methylorubrum extorquens (strain CM4 / NCIMB 13688) (Methylobacterium extorquens).